An 819-amino-acid chain; its full sequence is Lysine-specific demethylase JMJ18 (819 aa).

Positions 1 to 39 (MENPPLESEIKEDMSLKNHPPDKDKDKDTIMEQPSSPRH) are disordered. The segment covering 8–30 (SEIKEDMSLKNHPPDKDKDKDTI) has biased composition (basic and acidic residues). In terms of domain architecture, JmjN spans 59–100 (APVFTPSLEEFVDPLAYIEKIRPLAEPYGICRIIPPSTWKPP). Residues 120 to 171 (TVDLLQNREPMKKKPKSRKRKRRRNSRMGSSKRRSGSSPAESTSSPEAEEKF) are disordered. Positions 130–137 (MKKKPKSR) match the Nuclear localization signal motif. Residues 130–154 (MKKKPKSRKRKRRRNSRMGSSKRRS) show a composition bias toward basic residues. Over residues 155-165 (GSSPAESTSSP) the composition is skewed to low complexity. Residues 261–427 (QYTLSGWNLN…HGQNAVELYS (167 aa)) enclose the JmjC domain. The Fe cation site is built by His307, Glu309, and His395. The Zn(2+) site is built by Cys519, Cys522, Cys533, Cys535, Cys542, His545, Cys550, and Cys552. The C5HC2 zinc finger occupies 519–571 (CFSCFYDLHLSASGCKCSPEEYACLKHADDLCSCDVKDGFILLRYTMDELSSL). Residues 644-702 (ASENLGVSVEPINLGFLIFGKLWCNKYAIFPKGFRSRVKFYNVLDPTRMSNYISEVLDA) form the FYR N-terminal domain. In terms of domain architecture, FYR C-terminal spans 704 to 788 (LMGPLFRVTL…HRLVEYWNHK (85 aa)).

The protein belongs to the JARID1 histone demethylase family. The cofactor is Fe(2+). Expressed in vascular tissues of roots, cotyledons, leaves and flowers. Expressed predominantly in phloem companion cells of roots. Present in inflorescences, roots, siliques, leaves and stems.

Its subcellular location is the nucleus. The catalysed reaction is N(6),N(6),N(6)-trimethyl-L-lysyl(4)-[histone H3] + 2-oxoglutarate + O2 = N(6),N(6)-dimethyl-L-lysyl(4)-[histone H3] + formaldehyde + succinate + CO2. It catalyses the reaction N(6),N(6)-dimethyl-L-lysyl(4)-[histone H3] + 2-oxoglutarate + O2 = N(6)-methyl-L-lysyl(4)-[histone H3] + formaldehyde + succinate + CO2. In terms of biological role, histone demethylase that demethylates 'Lys-4' (H3K4me) of histone H3 with a specific activity for H3K4me3 and H3K4me2. No activity on H3K9me3/2, H3K27me3/2 and H3K36me3/2. Involved in the control of flowering time by demethylating H3K4me3 at the FLC locus and repressing its expression. The repression of FLC level and reduction in H3K4me3 at the FLC locus results in induction of the flowering activator FT, which is a downstream target of FLC. The chain is Lysine-specific demethylase JMJ18 from Arabidopsis thaliana (Mouse-ear cress).